The primary structure comprises 71 residues: Large ribosomal subunit protein bL31 (71 aa).

4 residues coordinate Zn(2+): Cys-16, Cys-18, Cys-38, and Cys-41.

The protein belongs to the bacterial ribosomal protein bL31 family. Type A subfamily. Part of the 50S ribosomal subunit. Zn(2+) serves as cofactor.

Binds the 23S rRNA. The chain is Large ribosomal subunit protein bL31 from Chromobacterium violaceum (strain ATCC 12472 / DSM 30191 / JCM 1249 / CCUG 213 / NBRC 12614 / NCIMB 9131 / NCTC 9757 / MK).